Reading from the N-terminus, the 146-residue chain is UPF0178 protein R01393 (146 aa).

Belongs to the UPF0178 family.

This Rhizobium meliloti (strain 1021) (Ensifer meliloti) protein is UPF0178 protein R01393.